A 145-amino-acid chain; its full sequence is Large ribosomal subunit protein uL13 (145 aa).

It belongs to the universal ribosomal protein uL13 family. Part of the 50S ribosomal subunit.

Its function is as follows. This protein is one of the early assembly proteins of the 50S ribosomal subunit, although it is not seen to bind rRNA by itself. It is important during the early stages of 50S assembly. The sequence is that of Large ribosomal subunit protein uL13 from Bacillus pumilus (strain SAFR-032).